The following is a 432-amino-acid chain: Enolase (432 aa).

(2R)-2-phosphoglycerate is bound at residue Q167. The active-site Proton donor is E209. Mg(2+)-binding residues include D246, E290, and D317. The (2R)-2-phosphoglycerate site is built by K342, R371, S372, and K393. Catalysis depends on K342, which acts as the Proton acceptor.

The protein belongs to the enolase family. Component of the RNA degradosome, a multiprotein complex involved in RNA processing and mRNA degradation. Requires Mg(2+) as cofactor.

It is found in the cytoplasm. The protein resides in the secreted. It localises to the cell surface. The catalysed reaction is (2R)-2-phosphoglycerate = phosphoenolpyruvate + H2O. It functions in the pathway carbohydrate degradation; glycolysis; pyruvate from D-glyceraldehyde 3-phosphate: step 4/5. Its function is as follows. Catalyzes the reversible conversion of 2-phosphoglycerate (2-PG) into phosphoenolpyruvate (PEP). It is essential for the degradation of carbohydrates via glycolysis. The sequence is that of Enolase from Klebsiella pneumoniae subsp. pneumoniae (strain ATCC 700721 / MGH 78578).